Reading from the N-terminus, the 118-residue chain is Protein YoeF (118 aa).

This chain is Protein YoeF (yoeF), found in Escherichia coli (strain K12).